We begin with the raw amino-acid sequence, 392 residues long: Aspartate aminotransferase (392 aa).

The L-aspartate site is built by glycine 40, tryptophan 126, and asparagine 176. Lysine 239 carries the N6-(pyridoxal phosphate)lysine modification.

It belongs to the class-I pyridoxal-phosphate-dependent aminotransferase family. In terms of assembly, homodimer. Pyridoxal 5'-phosphate serves as cofactor.

It localises to the cytoplasm. The catalysed reaction is L-aspartate + 2-oxoglutarate = oxaloacetate + L-glutamate. This Bacillus sp. (strain YM-2) protein is Aspartate aminotransferase.